A 399-amino-acid polypeptide reads, in one-letter code: Argininosuccinate synthase (399 aa).

9 to 17 (AYSGGLDTS) contacts ATP. Residue tyrosine 85 coordinates L-citrulline. Glycine 115 provides a ligand contact to ATP. The L-aspartate site is built by threonine 117, asparagine 121, and aspartate 122. An L-citrulline-binding site is contributed by asparagine 121. Arginine 125, serine 173, glutamate 258, and tyrosine 270 together coordinate L-citrulline.

It belongs to the argininosuccinate synthase family. Type 1 subfamily. In terms of assembly, homotetramer.

The protein resides in the cytoplasm. It carries out the reaction L-citrulline + L-aspartate + ATP = 2-(N(omega)-L-arginino)succinate + AMP + diphosphate + H(+). It functions in the pathway amino-acid biosynthesis; L-arginine biosynthesis; L-arginine from L-ornithine and carbamoyl phosphate: step 2/3. The chain is Argininosuccinate synthase from Streptococcus gordonii (strain Challis / ATCC 35105 / BCRC 15272 / CH1 / DL1 / V288).